Reading from the N-terminus, the 1591-residue chain is Mediator of RNA polymerase II transcription subunit 12 (1591 aa).

Disordered regions lie at residues 1–116, 132–176, and 1488–1530; these read MIPH…LSWR, GAGE…AAGL, and NATL…SLGV. The segment covering 40–53 has biased composition (polar residues); the sequence is EQSSMPAPQPQTGP. Over residues 66–80 the composition is skewed to basic and acidic residues; sequence AQEREHPAKRLRLDI. Low complexity predominate over residues 99–108; the sequence is PKSTPVSTSS. Over residues 151–162 the composition is skewed to pro residues; the sequence is LSPPSFPAPPWK. A compositionally biased stretch (low complexity) spans 1496–1512; the sequence is PSPAASGSTPAPTPSGS.

Belongs to the Mediator complex subunit 12 family. As to quaternary structure, component of the srb8-11 complex, which itself associates with the Mediator complex.

Its subcellular location is the nucleus. Component of the srb8-11 complex. The srb8-11 complex is a regulatory module of the Mediator complex which is itself involved in regulation of basal and activated RNA polymerase II-dependent transcription. The srb8-11 complex may be involved in the transcriptional repression of a subset of genes regulated by Mediator. It may inhibit the association of the Mediator complex with RNA polymerase II to form the holoenzyme complex. This is Mediator of RNA polymerase II transcription subunit 12 (srb8) from Aspergillus clavatus (strain ATCC 1007 / CBS 513.65 / DSM 816 / NCTC 3887 / NRRL 1 / QM 1276 / 107).